Here is a 363-residue protein sequence, read N- to C-terminus: Type-2 angiotensin II receptor (363 aa).

Over 1–45 (MKDNFSFAATSRNITSSLPFDNLNATGTNESAFNCSHKPADKHLE) the chain is Extracellular. Residues asparagine 4, asparagine 13, asparagine 24, asparagine 29, and asparagine 34 are each glycosylated (N-linked (GlcNAc...) asparagine). 2 cysteine pairs are disulfide-bonded: cysteine 35–cysteine 290 and cysteine 117–cysteine 195. A helical transmembrane segment spans residues 46–70 (AIPVLYYMIFVIGFAVNIVVVSLFC). Residues 71-80 (CQKGPKKVSS) are Cytoplasmic-facing. Residues 81–104 (IYIFNLAVADLLLLATLPLWATYY) traverse the membrane as a helical segment. Positions 103 and 104 each coordinate angiotensin II. The Extracellular portion of the chain corresponds to 105-114 (SYRYDWLFGP). A helical transmembrane segment spans residues 115-140 (VMCKVFGSFLTLNMFASIFFITCMSV). At 141–159 (DRYQSVIYPFLSQRRNPWQ) the chain is on the cytoplasmic side. The chain crosses the membrane as a helical span at residues 160-181 (ASYVVPLVWCMACLSSLPTFYF). Angiotensin II-binding residues include arginine 182, tyrosine 204, and lysine 215. Topologically, residues 182–206 (RDVRTIEYLGVNACIMAFPPEKYAQ) are extracellular. Residues 207–232 (WSAGIALMKNILGFIIPLIFIATCYF) form a helical membrane-spanning segment. Residues 233 to 257 (GIRKHLLKTNSYGKNRITRDQVLKM) lie on the Cytoplasmic side of the membrane. A helical transmembrane segment spans residues 258-281 (AAAVVLAFIICWLPFHVLTFLDAL). Residue aspartate 279 participates in angiotensin II binding. Over 282–294 (TWMGIINSCEVIA) the chain is Extracellular. A helical transmembrane segment spans residues 295–320 (VIDLALPFAILLGFTNSCVNPFLYCF). Aspartate 297 is a binding site for angiotensin II. Topologically, residues 321–363 (VGNRFQQKLRSVFRVPITWLQGKRETMSCRKSSSLREMDTFVS) are cytoplasmic. The interval 324 to 333 (RFQQKLRSVF) is helix VIII. Phosphoserine; by PKC is present on serine 354.

The protein belongs to the G-protein coupled receptor 1 family. As to quaternary structure, interacts with MTUS1. Abundant expression in fetal tissues, immature brain, skin wound and atretic ovarian follicles.

The protein localises to the cell membrane. Receptor for angiotensin II, a vasoconstricting peptide. Signals primarily via a non-canonical G-protein- and beta-arrestin independent pathways. Cooperates with MTUS1 to inhibit ERK2 activation and cell proliferation. The chain is Type-2 angiotensin II receptor from Rattus norvegicus (Rat).